Here is a 236-residue protein sequence, read N- to C-terminus: Venom metalloproteinase antarease-like TfasMP_A (236 aa).

Residues 4 to 232 form the Peptidase M12B domain; that stretch reads IVVEYYIVTD…KPAASCIFEQ (229 aa). Residue His-161 coordinates Zn(2+). Glu-162 is a catalytic residue. 2 residues coordinate Zn(2+): His-165 and His-171.

It belongs to the venom metalloproteinase (M12B) family. Zn(2+) serves as cofactor. Contains several disulfide bonds. Expressed by the venom gland.

It localises to the secreted. With respect to regulation, inhibited by EDTA. Functionally, acts as a metalloprotease. Penetrates intact tissue and specifically cleaves the vesicle-associated membrane protein 2 (VAMP2) (part of the SNARE complex) involved in pancreatic secretion, thus disrupting the normal vesicular traffic. The polypeptide is Venom metalloproteinase antarease-like TfasMP_A (Tityus fasciolatus (Central Brazilian scorpion)).